A 402-amino-acid chain; its full sequence is MKLMTMPSEFQKALPILTKIKEAGYEAYFVGGSVRDVLLERPIHDVDIATSSYPEETKAIFNRTVDVGIEHGTVLVLENGGEYEITTFRTEDVYVDYRRPSQVSFVRSLEEDLKRRDFTVNALALDENGQVIDKFRGLIDLEQKRLRAVGKAEERFEEDALRIMRGFRFAASLDFDIEAATFEAMRSHSPLLEKISVERSFTEFDKLLMAPHWRKGISAMIACQAYDYLPGLKQQEAGLNHLIVSLKDNFTFSDHHQAWAYVMISLAIEDPKSFLKAWKTSNDFQRYVTKLIALYRIRQERSFEKLDIYQYGKEMASLVEGLRKAQSLSVDMDHIEALDQALAIHNKYDIVLNGSHLIKDFGMKPGPQLGLMLEKVELAIVEGRLDNDFTTIEAFVREELAT.

Positions 32 and 35 each coordinate ATP. CTP contacts are provided by glycine 32 and arginine 35. 2 residues coordinate Mg(2+): aspartate 45 and aspartate 47. Residues arginine 116, aspartate 159, arginine 162, arginine 165, and arginine 168 each contribute to the ATP site. CTP is bound by residues arginine 116, aspartate 159, arginine 162, arginine 165, and arginine 168.

The protein belongs to the tRNA nucleotidyltransferase/poly(A) polymerase family. Bacterial CCA-adding enzyme type 3 subfamily. As to quaternary structure, homodimer. Mg(2+) serves as cofactor.

It catalyses the reaction a tRNA precursor + 2 CTP + ATP = a tRNA with a 3' CCA end + 3 diphosphate. The catalysed reaction is a tRNA with a 3' CCA end + 2 CTP + ATP = a tRNA with a 3' CCACCA end + 3 diphosphate. Catalyzes the addition and repair of the essential 3'-terminal CCA sequence in tRNAs without using a nucleic acid template. Adds these three nucleotides in the order of C, C, and A to the tRNA nucleotide-73, using CTP and ATP as substrates and producing inorganic pyrophosphate. tRNA 3'-terminal CCA addition is required both for tRNA processing and repair. Also involved in tRNA surveillance by mediating tandem CCA addition to generate a CCACCA at the 3' terminus of unstable tRNAs. While stable tRNAs receive only 3'-terminal CCA, unstable tRNAs are marked with CCACCA and rapidly degraded. The protein is CCA-adding enzyme of Streptococcus pyogenes serotype M3 (strain ATCC BAA-595 / MGAS315).